Reading from the N-terminus, the 382-residue chain is Glutamate 5-kinase (382 aa).

Lys15 is an ATP binding site. Positions 62, 149, and 161 each coordinate substrate. 181–182 (TD) contributes to the ATP binding site. One can recognise a PUA domain in the interval 288-366 (RGSVSVDAGA…VEIERLLGYS (79 aa)).

It belongs to the glutamate 5-kinase family.

The protein resides in the cytoplasm. The catalysed reaction is L-glutamate + ATP = L-glutamyl 5-phosphate + ADP. It functions in the pathway amino-acid biosynthesis; L-proline biosynthesis; L-glutamate 5-semialdehyde from L-glutamate: step 1/2. In terms of biological role, catalyzes the transfer of a phosphate group to glutamate to form L-glutamate 5-phosphate. The chain is Glutamate 5-kinase from Delftia acidovorans (strain DSM 14801 / SPH-1).